The following is a 552-amino-acid chain: uncharacterized protein (552 aa).

One can recognise a DhaL domain in the interval 8–200 (KLFADMIIQG…LLCVYEGFLK (193 aa)).

This is an uncharacterized protein from Staphylococcus epidermidis (strain ATCC 35984 / DSM 28319 / BCRC 17069 / CCUG 31568 / BM 3577 / RP62A).